The chain runs to 111 residues: Large ribosomal subunit protein uL22 (111 aa).

The protein belongs to the universal ribosomal protein uL22 family. In terms of assembly, part of the 50S ribosomal subunit.

In terms of biological role, this protein binds specifically to 23S rRNA; its binding is stimulated by other ribosomal proteins, e.g. L4, L17, and L20. It is important during the early stages of 50S assembly. It makes multiple contacts with different domains of the 23S rRNA in the assembled 50S subunit and ribosome. Functionally, the globular domain of the protein is located near the polypeptide exit tunnel on the outside of the subunit, while an extended beta-hairpin is found that lines the wall of the exit tunnel in the center of the 70S ribosome. This chain is Large ribosomal subunit protein uL22, found in Mycoplasma capricolum subsp. capricolum (strain California kid / ATCC 27343 / NCTC 10154).